Consider the following 200-residue polypeptide: dITP/XTP pyrophosphatase (200 aa).

Substrate is bound at residue 8-13 (TGNQGK). The active-site Proton acceptor is Asp69. Asp69 contacts Mg(2+). Residues Ser70, 154-157 (FGYD), Lys177, and 182-183 (HR) each bind substrate.

The protein belongs to the HAM1 NTPase family. Homodimer. The cofactor is Mg(2+).

It carries out the reaction XTP + H2O = XMP + diphosphate + H(+). The enzyme catalyses dITP + H2O = dIMP + diphosphate + H(+). It catalyses the reaction ITP + H2O = IMP + diphosphate + H(+). Its function is as follows. Pyrophosphatase that catalyzes the hydrolysis of nucleoside triphosphates to their monophosphate derivatives, with a high preference for the non-canonical purine nucleotides XTP (xanthosine triphosphate), dITP (deoxyinosine triphosphate) and ITP. Seems to function as a house-cleaning enzyme that removes non-canonical purine nucleotides from the nucleotide pool, thus preventing their incorporation into DNA/RNA and avoiding chromosomal lesions. The chain is dITP/XTP pyrophosphatase from Vibrio vulnificus (strain CMCP6).